Reading from the N-terminus, the 192-residue chain is Inosine triphosphate pyrophosphatase (192 aa).

10–15 (TGNANK) contributes to the ITP binding site. Glu-43 lines the Mg(2+) pocket. ITP contacts are provided by residues Lys-56, 74-75 (DT), Lys-91, 149-152 (FGWD), Lys-173, and 178-179 (HR).

It belongs to the HAM1 NTPase family. In terms of assembly, homodimer. Mg(2+) serves as cofactor. Mn(2+) is required as a cofactor.

Its subcellular location is the cytoplasm. It is found in the nucleus. The enzyme catalyses ITP + H2O = IMP + diphosphate + H(+). It carries out the reaction dITP + H2O = dIMP + diphosphate + H(+). The catalysed reaction is XTP + H2O = XMP + diphosphate + H(+). Functionally, pyrophosphatase that hydrolyzes non-canonical purine nucleotides such as inosine triphosphate (ITP), deoxyinosine triphosphate (dITP) or xanthosine 5'-triphosphate (XTP) to their respective monophosphate derivatives. The enzyme does not distinguish between the deoxy- and ribose forms. Probably excludes non-canonical purines from RNA and DNA precursor pools, thus preventing their incorporation into RNA and DNA and avoiding chromosomal lesions. The chain is Inosine triphosphate pyrophosphatase from Candida glabrata (strain ATCC 2001 / BCRC 20586 / JCM 3761 / NBRC 0622 / NRRL Y-65 / CBS 138) (Yeast).